A 510-amino-acid polypeptide reads, in one-letter code: MYSLEIIPGKLSLKQLREVSRHPTKLSLDPNALPDMLISADVVAQVIEEGKTVYGINTGFGLLANTRIAEKDLETLQRSIVLSHAAGIGEFMDDATVRLMMVLKINSLARGYSGIRPLVIDALIQLVNSEVYPCIPKKGSVGASGDLAPLAHMSTVLLGEGEARYRGEVITGKTALEIAGLTPITLAPKEGLALLNGTQASTAFALEGLFAAEDLYASATVCGAMSVEAALGSRKPFDPRIHRVRGHRSQMDAALAYRHLLAQSSDIGLSHQCCERVQDPYSLRCQPQVMGACLQQIRNSADILEIEANSVSDNPLVFADDGDIISGGNFHAEPVAMAADNLALAISEIGSLSERRMALLIDSGLSKLPPFLVDNGGVNSGFMIAQVTAAALASENKTLAHPASIDSLPTSANQEDHVSMATFAGRRLGDMAENTRGILAVELLAAAQGLDFRAPNKSSNRIEKAKELLRERVDFYDKDRYFAPDIAKANSLLKEAVYNHLMPDTLLPSI.

Positions 143-145 form a cross-link, 5-imidazolinone (Ala-Gly); that stretch reads ASG. Serine 144 carries the 2,3-didehydroalanine (Ser) modification.

Belongs to the PAL/histidase family. In terms of processing, contains an active site 4-methylidene-imidazol-5-one (MIO), which is formed autocatalytically by cyclization and dehydration of residues Ala-Ser-Gly.

The protein resides in the cytoplasm. The catalysed reaction is L-histidine = trans-urocanate + NH4(+). It functions in the pathway amino-acid degradation; L-histidine degradation into L-glutamate; N-formimidoyl-L-glutamate from L-histidine: step 1/3. The protein is Histidine ammonia-lyase of Aliivibrio fischeri (strain ATCC 700601 / ES114) (Vibrio fischeri).